Consider the following 248-residue polypeptide: Triosephosphate isomerase (248 aa).

Substrate-binding residues include asparagine 12 and lysine 14. At lysine 14 the chain carries N6-acetyllysine. Tyrosine 68 is modified (3'-nitrotyrosine). The active-site Electrophile is histidine 96. Position 106 is a phosphoserine (serine 106). A Glycyl lysine isopeptide (Lys-Gly) (interchain with G-Cter in SUMO1) cross-link involves residue lysine 142. Lysine 149 carries the post-translational modification N6-succinyllysine. Position 156 is an N6-acetyllysine; alternate (lysine 156). At lysine 156 the chain carries N6-succinyllysine; alternate. Glutamate 166 acts as the Proton acceptor in catalysis. A Phosphothreonine modification is found at threonine 173. Position 194 is an N6-acetyllysine; alternate (lysine 194). Lysine 194 bears the N6-succinyllysine; alternate mark. Position 194 is an N6-methyllysine; alternate (lysine 194). Tyrosine 209 carries the post-translational modification 3'-nitrotyrosine. Serine 212 carries the phosphoserine modification. Residue threonine 214 is modified to Phosphothreonine. Serine 223 is subject to Phosphoserine. The residue at position 238 (lysine 238) is an N6-acetyllysine.

The protein belongs to the triosephosphate isomerase family. In terms of assembly, homodimer.

The protein resides in the cytoplasm. The catalysed reaction is dihydroxyacetone phosphate = methylglyoxal + phosphate. It catalyses the reaction D-glyceraldehyde 3-phosphate = dihydroxyacetone phosphate. Its pathway is carbohydrate degradation; glycolysis; D-glyceraldehyde 3-phosphate from glycerone phosphate: step 1/1. It functions in the pathway carbohydrate biosynthesis; gluconeogenesis. Functionally, triosephosphate isomerase is an extremely efficient metabolic enzyme that catalyzes the interconversion between dihydroxyacetone phosphate (DHAP) and D-glyceraldehyde-3-phosphate (G3P) in glycolysis and gluconeogenesis. In terms of biological role, it is also responsible for the non-negligible production of methylglyoxal a reactive cytotoxic side-product that modifies and can alter proteins, DNA and lipids. This Sus scrofa (Pig) protein is Triosephosphate isomerase (TPI1).